Reading from the N-terminus, the 180-residue chain is ATP-dependent protease subunit HslV (180 aa).

The active site involves threonine 5. Na(+)-binding residues include glycine 161, cysteine 164, and threonine 167.

This sequence belongs to the peptidase T1B family. HslV subfamily. In terms of assembly, a double ring-shaped homohexamer of HslV is capped on each side by a ring-shaped HslU homohexamer. The assembly of the HslU/HslV complex is dependent on binding of ATP.

It is found in the cytoplasm. The catalysed reaction is ATP-dependent cleavage of peptide bonds with broad specificity.. With respect to regulation, allosterically activated by HslU binding. In terms of biological role, protease subunit of a proteasome-like degradation complex believed to be a general protein degrading machinery. This is ATP-dependent protease subunit HslV from Campylobacter fetus subsp. fetus (strain 82-40).